Reading from the N-terminus, the 496-residue chain is MKYEDLRDFIAQLEARGELKRIAAPVDTHLEMTEIADRVLRAGGPALLFEKPVTKGVPQAIPVLANLFGTPQRVAMGMGEDVADGDWSTPLREVGRLLSFLKEPEPPKGLKDAWEKWPVLKQVLNMAPREVRSAPCQQVVWEGDQVDLGKLPIQHCWPGDAAPLITWGLVVTRGPHKKRQNLGIYRQQVIGRNRVIMRWLAHRGGALDFREHQQAHPGEPFPVTVVLGCDPATILGAVTPVPDTISEYQFAGLLRGAKTELVKCLGSDLQVPASSEIVLEGVIHADDMAPEGPYGDHTGYYNEVADFPVFTIERITMRRDPIYHSTYTGKPPDEPAMLGLALNEVFVPLLQKQFPEITDFYLPPEGCSYRLAVVSMKKQYPGHAKRVMFGIWSFLRQFMYTKFIIVVDDDVNIRDWKEVIWAMTTRVDATRDTTLVDNTPIDYLDFASPVAGLGSKMGIDATNKWPGETNREWGRPIVMDAAVKRRVDEIWSTLGL.

Asparagine 181 is a binding site for Mn(2+). Residues 184 to 186 (IYR), 198 to 200 (RWL), and 203 to 204 (RG) each bind prenylated FMN. Glutamate 247 is a binding site for Mn(2+). Aspartate 296 serves as the catalytic Proton donor.

Belongs to the UbiD family. In terms of assembly, homohexamer. It depends on prenylated FMN as a cofactor. The cofactor is Mn(2+).

The protein resides in the cell membrane. The enzyme catalyses a 4-hydroxy-3-(all-trans-polyprenyl)benzoate + H(+) = a 2-(all-trans-polyprenyl)phenol + CO2. It participates in cofactor biosynthesis; ubiquinone biosynthesis. In terms of biological role, catalyzes the decarboxylation of 3-octaprenyl-4-hydroxy benzoate to 2-octaprenylphenol, an intermediate step in ubiquinone biosynthesis. This is 3-octaprenyl-4-hydroxybenzoate carboxy-lyase from Azoarcus sp. (strain BH72).